The primary structure comprises 21 residues: Major outer membrane protein P44 (21 aa).

Monomer.

It localises to the cell outer membrane. The sequence is that of Major outer membrane protein P44 from Mannheimia haemolytica (Pasteurella haemolytica).